Reading from the N-terminus, the 145-residue chain is 3-hydroxyacyl-[acyl-carrier-protein] dehydratase FabZ (145 aa).

The active site involves His49.

This sequence belongs to the thioester dehydratase family. FabZ subfamily.

Its subcellular location is the cytoplasm. It catalyses the reaction a (3R)-hydroxyacyl-[ACP] = a (2E)-enoyl-[ACP] + H2O. Functionally, involved in unsaturated fatty acids biosynthesis. Catalyzes the dehydration of short chain beta-hydroxyacyl-ACPs and long chain saturated and unsaturated beta-hydroxyacyl-ACPs. The protein is 3-hydroxyacyl-[acyl-carrier-protein] dehydratase FabZ of Rickettsia conorii (strain ATCC VR-613 / Malish 7).